Reading from the N-terminus, the 507-residue chain is uncharacterized protein (507 aa).

14 helical membrane passes run 8–28 (VKGV…AYLV), 41–61 (VGLF…RAFG), 86–106 (IVFV…LVVI), 130–150 (INIL…VAFF), 171–191 (ILSV…HNAY), 193–213 (PSVS…YIVV), 235–255 (LFSY…LGYL), 275–295 (VAMP…AVLF), 323–343 (IIVT…INIL), 355–375 (IQIL…FNIL), 387–407 (ILYI…PKFG), 408–428 (IIGA…FQIW), 444–464 (ILVI…KDLI), and 467–487 (VILQ…LGIF).

The protein belongs to the polysaccharide synthase family.

The protein localises to the cell membrane. This is an uncharacterized protein from Methanocaldococcus jannaschii (strain ATCC 43067 / DSM 2661 / JAL-1 / JCM 10045 / NBRC 100440) (Methanococcus jannaschii).